The chain runs to 482 residues: MTDQELGITESKEHNPGEWYAEVVQKAGLADYAPMGGFIVTRPRGYALWERLQDHLDGWFKETGVQNTYFPMFIPESYLEREKDIVDGFDPEVAWVTHGGHDELEERLAVRPTSESIITPFIAEWVRSYRDLPLRVNQWCSVVRWEATETKPFFRTKEFLWQEGHTAHATEESAWDETMTRLEQYERLYEEVMAIPGMTGRKPEHDKFPGADTTTTIEALMPDGKSVQAGTSHYLGTSFAEAFDIEYTDEDETKQTAHTTSWGLSWRALGALIMTHSDDQGLVIPPALAPTQVVVVPIWQADTEEAVKEYAADLAAELDEQFRVELDDRDERNPGFKFNEHELQGVPLRIEIGPNEVEDEAATLVHRPDGESDVAERESITDAVDEALETVYAKLYASAEATLEENIRKAHGRGEILGTLGQHGGYVKTGWCGDEACEAEIKDEIAAEIVMLPLDEDEPPVYDTCGVCGDEATETAYFAKSY.

It belongs to the class-II aminoacyl-tRNA synthetase family. ProS type 3 subfamily. Homodimer.

Its subcellular location is the cytoplasm. It catalyses the reaction tRNA(Pro) + L-proline + ATP = L-prolyl-tRNA(Pro) + AMP + diphosphate. Functionally, catalyzes the attachment of proline to tRNA(Pro) in a two-step reaction: proline is first activated by ATP to form Pro-AMP and then transferred to the acceptor end of tRNA(Pro). The sequence is that of Proline--tRNA ligase from Natronomonas pharaonis (strain ATCC 35678 / DSM 2160 / CIP 103997 / JCM 8858 / NBRC 14720 / NCIMB 2260 / Gabara) (Halobacterium pharaonis).